Reading from the N-terminus, the 310-residue chain is tRNA uridine(34) hydroxylase (310 aa).

The 95-residue stretch at 124-218 folds into the Rhodanese domain; that stretch reads SDPEVLLIDT…YFEEVPQEES (95 aa). Catalysis depends on Cys178, which acts as the Cysteine persulfide intermediate.

The protein belongs to the TrhO family.

The catalysed reaction is uridine(34) in tRNA + AH2 + O2 = 5-hydroxyuridine(34) in tRNA + A + H2O. Catalyzes oxygen-dependent 5-hydroxyuridine (ho5U) modification at position 34 in tRNAs. The chain is tRNA uridine(34) hydroxylase from Pseudomonas putida (strain ATCC 700007 / DSM 6899 / JCM 31910 / BCRC 17059 / LMG 24140 / F1).